A 137-amino-acid polypeptide reads, in one-letter code: MSSLVRRIISTAKAPAAIGPYSQAVLVDRTIYISGQLGMDPASGQLVPGGVVEEAKQALTNIGEILKAAGCDFTNVVKATVLLADINDFSAVNDVYKQYFQSSFPARAAYQVAALPKGGRVEIEAIAVQGPLTTASL.

Serine 2 bears the N-acetylserine mark. An N6-succinyllysine mark is found at lysine 13 and lysine 67. A Phosphothreonine modification is found at threonine 74. A Phosphoserine modification is found at serine 136.

Homotrimer. Interacts with YTHDF2. Expressed by various malignant neoplasms.

It is found in the cytoplasm. The protein resides in the nucleus. The protein localises to the peroxisome. Its subcellular location is the mitochondrion. The enzyme catalyses 2-iminobutanoate + H2O = 2-oxobutanoate + NH4(+). It catalyses the reaction 2-iminopropanoate + H2O = pyruvate + NH4(+). Its function is as follows. Catalyzes the hydrolytic deamination of enamine/imine intermediates that form during the course of normal metabolism. May facilitate the release of ammonia from these potentially toxic reactive metabolites, reducing their impact on cellular components. It may act on enamine/imine intermediates formed by several types of pyridoxal-5'-phosphate-dependent dehydratases including L-threonine dehydratase. In terms of biological role, also promotes endoribonucleolytic cleavage of some transcripts by promoting recruitment of the ribonuclease P/MRP complex. Acts by bridging YTHDF2 and the ribonuclease P/MRP complex. RIDA/HRSP12 binds to N6-methyladenosine (m6A)-containing mRNAs containing a 5'-GGUUC-3' motif: cooperative binding of RIDA/HRSP12 and YTHDF2 to such transcripts lead to recruitment of the ribonuclease P/MRP complex and subsequent endoribonucleolytic cleavage. The chain is 2-iminobutanoate/2-iminopropanoate deaminase from Capra hircus (Goat).